A 142-amino-acid polypeptide reads, in one-letter code: Large ribosomal subunit protein uL13 (142 aa).

Belongs to the universal ribosomal protein uL13 family. Part of the 50S ribosomal subunit.

This protein is one of the early assembly proteins of the 50S ribosomal subunit, although it is not seen to bind rRNA by itself. It is important during the early stages of 50S assembly. The protein is Large ribosomal subunit protein uL13 of Agathobacter rectalis (strain ATCC 33656 / DSM 3377 / JCM 17463 / KCTC 5835 / VPI 0990) (Eubacterium rectale).